We begin with the raw amino-acid sequence, 79 residues long: Potassium channel toxin Hge-beta-KTx (79 aa).

The N-terminal stretch at 1–21 is a signal peptide; that stretch reads MAKSFFAAFLIIMLISSLVDG. The 32-residue stretch at 48 to 79 folds into the BetaSPN-type CS-alpha/beta domain; sequence EYMCPVVSSFCKQHCARLGKSGQCDLLECICS. Intrachain disulfides connect Cys-51–Cys-71, Cys-58–Cys-76, and Cys-62–Cys-78.

In terms of tissue distribution, expressed by the venom gland.

The protein localises to the secreted. The full peptide presents antibacterial and cytotoxic activities. The synthetic C-terminus (AA 33-76) inhibits voltage-gated potassium channels Kv1.1/KCNA1, Kv1.2/KCNA2, and Kv1.3/KCNA3. This Hoffmannihadrurus gertschi (Scorpion) protein is Potassium channel toxin Hge-beta-KTx.